The following is a 601-amino-acid chain: DNA ligase 2 (601 aa).

ATP is bound at residue Glu-263. The active-site N6-AMP-lysine intermediate is Lys-265. ATP is bound by residues Arg-270, Arg-285, Glu-314, Phe-354, Arg-432, and Lys-438.

The protein belongs to the ATP-dependent DNA ligase family. The cofactor is Mg(2+).

The enzyme catalyses ATP + (deoxyribonucleotide)n-3'-hydroxyl + 5'-phospho-(deoxyribonucleotide)m = (deoxyribonucleotide)n+m + AMP + diphosphate.. DNA ligase that seals nicks in double-stranded DNA during DNA replication, DNA recombination and DNA repair. This is DNA ligase 2 from Thermofilum pendens (strain DSM 2475 / Hrk 5).